Reading from the N-terminus, the 320-residue chain is Annexin A5 (320 aa).

Alanine 2 is subject to N-acetylalanine. 4 Annexin repeats span residues 15-86, 87-158, 170-242, and 246-317; these read FDER…ALMK, PSRL…VLLQ, AQVE…AVVK, and SIPA…LLCG. Lysine 29 participates in a covalent cross-link: Glycyl lysine isopeptide (Lys-Gly) (interchain with G-Cter in SUMO1); alternate. A Glycyl lysine isopeptide (Lys-Gly) (interchain with G-Cter in SUMO2); alternate cross-link involves residue lysine 29. At serine 37 the chain carries Phosphoserine. Residues lysine 70, lysine 76, lysine 79, lysine 97, and lysine 101 each carry the N6-acetyllysine modification. Residue lysine 290 is modified to N6-succinyllysine. A [IL]-x-C-x-x-[DE] motif motif is present at residues 314–320; the sequence is LLCGGED.

Belongs to the annexin family. Monomer. Binds ATRX and EIF5B. S-nitrosylation is induced by interferon-gamma and oxidatively-modified low-densitity lipoprotein (LDL(ox)) possibly implicating the iNOS-S100A8/9 transnitrosylase complex.

Its function is as follows. This protein is an anticoagulant protein that acts as an indirect inhibitor of the thromboplastin-specific complex, which is involved in the blood coagulation cascade. In Macaca fascicularis (Crab-eating macaque), this protein is Annexin A5 (ANXA5).